We begin with the raw amino-acid sequence, 383 residues long: MIIASTFDYRKAAKRRLPPFLFHYIDGGAYAEETLRRNCSDLQALALRQRILRQVGGVDLSIKLFEQRLDLPIVLAPVGLTGMYARRGEVQAAHAATAKGIPFTLSSVSVCPIAEVQEAVGGGFWFQLYVLKDRGFMRDALERAWASGVRTLVFTVDMPIPGARYRDAHSGMSGPYAGLRRFLQAFTHPHWAWNVGIMGRPHDLGNVSTYLEKKIALDDYVGWLGANFDPSIGWHDLQWIRDFWKGKMILKGILDPEDAREAVQFGADGIVVSNHGGRQLDGVLSTARALPAIAEAVKNDLVILADSGVRSGLDVVRMIAQGADAVMIGRAFVYALAAAGEKGVAHLLDLFANEMRVAMTLTGAQTLKEITCESLVNTDAFKQ.

One can recognise an FMN hydroxy acid dehydrogenase domain in the interval methionine 1–alanine 380. Tyrosine 24 serves as a coordination point for substrate. FMN-binding residues include serine 106 and glutamine 127. Substrate is bound at residue tyrosine 129. Threonine 155 is an FMN binding site. Substrate is bound at residue arginine 164. Lysine 251 is a binding site for FMN. Histidine 275 serves as the catalytic Proton acceptor. Residue arginine 278 participates in substrate binding. An FMN-binding site is contributed by aspartate 306–arginine 330.

Belongs to the FMN-dependent alpha-hydroxy acid dehydrogenase family. The cofactor is FMN.

The protein localises to the cell inner membrane. It catalyses the reaction (S)-lactate + A = pyruvate + AH2. In terms of biological role, catalyzes the conversion of L-lactate to pyruvate. Is coupled to the respiratory chain. This chain is L-lactate dehydrogenase, found in Bartonella tribocorum (strain CIP 105476 / IBS 506).